Consider the following 335-residue polypeptide: UPF0353 protein MUL_1490 (335 aa).

The next 2 membrane-spanning stretches (helical) occupy residues W18–L38 and I67–T87. The 201-residue stretch at V98–I298 folds into the VWFA domain. Residues M309–I329 form a helical membrane-spanning segment.

It belongs to the UPF0353 family.

It localises to the cell membrane. This chain is UPF0353 protein MUL_1490, found in Mycobacterium ulcerans (strain Agy99).